Here is a 309-residue protein sequence, read N- to C-terminus: MSYASEVKKELTSLEVHEKNAKAELMALIRMNGAIGINNRQLTLNTQTENPAIARRIYSLLKEFYHLEAELSVRRKMKLKKNNLYIVRLRTGVKELLNDLSILKDDFQINEKVPEGLLTEESELRSYLRGAFLASGSVNNPETSRYHLEIYSLYESHNQMIADWINKYNLNARTTERRSGYIVYLKEAEHIADFLQLIGATNSMLKFEDVRIMRDMRNSVNRLVNCETANLNKVANASMKQINNIQFIDETVGLGELPPKLREVAEARLIHREVSLKELGELVPGGPISKSGINHRLRKINQYAEKLRA.

The H-T-H motif DNA-binding region spans 275–309 (SLKELGELVPGGPISKSGINHRLRKINQYAEKLRA).

It belongs to the WhiA family.

Functionally, involved in cell division and chromosome segregation. The polypeptide is Probable cell division protein WhiA (Pediococcus pentosaceus (strain ATCC 25745 / CCUG 21536 / LMG 10740 / 183-1w)).